Here is a 466-residue protein sequence, read N- to C-terminus: Probable multidrug resistance protein NorM (466 aa).

The next 11 membrane-spanning stretches (helical) occupy residues 68 to 90 (AHTV…SPLV), 110 to 132 (LWVA…HILI), 142 to 164 (ALAQ…FIAL), 177 to 199 (PLWI…IHGL), 209 to 231 (GAGL…IAAW), 251 to 273 (LVRQ…YGLF), 288 to 310 (LAAH…GIGM), 331 to 353 (AGLV…IILG), 368 to 387 (SAAT…TFFI), 407 to 429 (MTLA…VLAF), and 433 to 455 (LGAV…LLVL).

The protein belongs to the multi antimicrobial extrusion (MATE) (TC 2.A.66.1) family.

It is found in the cell inner membrane. Its function is as follows. Multidrug efflux pump. The polypeptide is Probable multidrug resistance protein NorM (norM) (Bradyrhizobium diazoefficiens (strain JCM 10833 / BCRC 13528 / IAM 13628 / NBRC 14792 / USDA 110)).